Reading from the N-terminus, the 326-residue chain is Serpentine receptor class alpha-12 (326 aa).

Over 1–17 (MSCASEVQAQLFTHPVQ) the chain is Extracellular. The chain crosses the membrane as a helical span at residues 18 to 38 (IIYACVQTVLFLATIIGSLLA). Topologically, residues 39-54 (IVQLCKKTTIPDSTKV) are cytoplasmic. Residues 55–75 (LLIGALFFANAHELAYFSSPF) form a helical membrane-spanning segment. Topologically, residues 76–101 (KVFKMNLFHTNTSCYPLASTLECIPT) are extracellular. The chain crosses the membrane as a helical span at residues 102-122 (TTVLAMGISGNMLIQSALSIF). Residues 123-138 (RLLATIFPVCYSRMRA) lie on the Cytoplasmic side of the membrane. A helical transmembrane segment spans residues 139–159 (LPGVVLLFMVLIPSFLSYSWI). Topologically, residues 160–185 (RSDIVLDDYQMFCSQWSANISSRANT) are extracellular. The chain crosses the membrane as a helical span at residues 186–206 (YLEYCSYLTVAHIIINALIIL). At 207-234 (RNRSVESKCRFDVQQRYLNSETLKTTQT) the chain is on the cytoplasmic side. A helical membrane pass occupies residues 235–255 (ICYLSIAQFLAMFLYSGGVLF). The Extracellular portion of the chain corresponds to 256-270 (MRKNQKNIPTLIYIN). The helical transmembrane segment at 271–291 (VIVWVYAPPYACVSLAPLILF) threads the bilayer. Over 292 to 326 (SLWNLKKQRQIRIQSITVQKETQEDHIRKLQLSWG) the chain is Cytoplasmic.

Belongs to the nematode receptor-like protein sra family.

It is found in the membrane. The sequence is that of Serpentine receptor class alpha-12 from Caenorhabditis briggsae.